The chain runs to 433 residues: Adenylosuccinate synthetase (433 aa).

GTP contacts are provided by residues 11 to 17 (GDEGKGK) and 39 to 41 (GHT). D12 serves as the catalytic Proton acceptor. 2 residues coordinate Mg(2+): D12 and G39. IMP is bound by residues 12–15 (DEGK), 37–40 (NAGH), T134, R148, N230, T245, and R309. The active-site Proton donor is H40. Residue 305–311 (VTTGRKR) coordinates substrate. Residues R311, 337-339 (KLD), and 419-421 (GTG) contribute to the GTP site.

It belongs to the adenylosuccinate synthetase family. Homodimer. It depends on Mg(2+) as a cofactor.

Its subcellular location is the cytoplasm. The catalysed reaction is IMP + L-aspartate + GTP = N(6)-(1,2-dicarboxyethyl)-AMP + GDP + phosphate + 2 H(+). It participates in purine metabolism; AMP biosynthesis via de novo pathway; AMP from IMP: step 1/2. In terms of biological role, plays an important role in the de novo pathway and in the salvage pathway of purine nucleotide biosynthesis. Catalyzes the first committed step in the biosynthesis of AMP from IMP. This is Adenylosuccinate synthetase from Saccharomyces cerevisiae (strain YJM789) (Baker's yeast).